The chain runs to 285 residues: Iodotyrosine deiodinase 1 (285 aa).

Residues 1–21 form a helical membrane-spanning segment; it reads MFLLTPVLVAVVCILVIWVFK. FMN-binding positions include 96-100 and 124-125; these read RRSIR and SG. Positions 126, 153, 157, and 178 each coordinate 3,5-diiodo-L-tyrosine. 3-iodo-L-tyrosine-binding residues include alanine 126, glutamate 153, tyrosine 157, and lysine 178. Residues 233–235 and arginine 275 each bind FMN; that span reads TTT.

This sequence belongs to the nitroreductase family. Homodimer. FMN is required as a cofactor.

Its subcellular location is the cell membrane. The protein resides in the cytoplasmic vesicle membrane. The enzyme catalyses 2 iodide + L-tyrosine + 2 NADP(+) = 3,5-diiodo-L-tyrosine + 2 NADPH + H(+). It catalyses the reaction iodide + L-tyrosine + NADP(+) = 3-iodo-L-tyrosine + NADPH. The catalysed reaction is 3-iodo-L-tyrosine + iodide + NADP(+) = 3,5-diiodo-L-tyrosine + NADPH + H(+). It carries out the reaction L-tyrosine + chloride + NADP(+) = 3-chloro-L-tyrosine + NADPH. The enzyme catalyses bromide + L-tyrosine + NADP(+) = 3-bromo-L-tyrosine + NADPH. Functionally, catalyzes the dehalogenation of halotyrosines such as 3-bromo-L-tyrosine, 3-chloro-L-tyrosine, 3-iodo-L-tyrosine and 3,5-diiodo-L-tyrosine. During thyroid hormone biosynthesis, facilitates iodide salvage by catalysing the oxidative NADPH-dependent deiodination of the halogenated by-products of thyroid hormone production, monoiodotyrosine (L-MIT) and diiodotyrosine (L-DIT). The scavanged iodide can then reenter the hormone-producing pathways. Acts more efficiently on 3-iodo-L-tyrosine than 3,5-diiodo-L-tyrosine. This chain is Iodotyrosine deiodinase 1 (Iyd), found in Rattus norvegicus (Rat).